The chain runs to 169 residues: ATP-dependent Clp protease adapter protein CLPS2, chloroplastic (169 aa).

A chloroplast-targeting transit peptide spans 1–33; that stretch reads MLATRCKCNLPSRSFVAPARSVRTRALHVEGRF. Residues 67–92 form a disordered region; the sequence is DAKTDNGNNGSNTDKDKKSPPGGGNY.

It belongs to the ClpS family.

Its subcellular location is the plastid. It is found in the chloroplast stroma. Its function is as follows. Small adapter protein that modulate the activity of plastid Clp protease system (CLPC). Probably involved in substrate selection for plastid CLPC. The polypeptide is ATP-dependent Clp protease adapter protein CLPS2, chloroplastic (Chlamydomonas reinhardtii (Chlamydomonas smithii)).